Here is an 89-residue protein sequence, read N- to C-terminus: Envelope glycoprotein N (89 aa).

Positions 1-24 (MAPGRGVLLLICLCLMDNVSQVVC) are cleaved as a signal peptide. The Virion surface portion of the chain corresponds to 25-56 (SQNSTTPSKFPTFYSYDCNADTYAPQLTSFST). The helical transmembrane segment at 57 to 77 (IWTLLNVLVMTIACVIYLIYM) threads the bilayer. Residues 78-89 (CFNKFVATMTNT) lie on the Intravirion side of the membrane.

Belongs to the herpesviridae glycoprotein N family. Interacts (via N-terminus) with gM (via N-terminus). The gM-gN heterodimer forms the gCII complex.

It is found in the virion membrane. Its subcellular location is the host membrane. The protein resides in the host Golgi apparatus. It localises to the host trans-Golgi network. In terms of biological role, envelope glycoprotein necessary for proper maturation of gM and modulation of its membrane fusion activity. Also plays a critical role in virion morphogenesis. This chain is Envelope glycoprotein N, found in Equine herpesvirus 2 (strain 86/87) (EHV-2).